Reading from the N-terminus, the 505-residue chain is Maturase K (505 aa).

It belongs to the intron maturase 2 family. MatK subfamily.

It is found in the plastid. The protein localises to the chloroplast. Functionally, usually encoded in the trnK tRNA gene intron. Probably assists in splicing its own and other chloroplast group II introns. The polypeptide is Maturase K (Ficus carica (Common fig)).